The primary structure comprises 433 residues: GTPase Obg (433 aa).

Positions 1–159 constitute an Obg domain; it reads MGLTDYCECR…LHVSLEIKYL (159 aa). The OBG-type G domain maps to 160–329; the sequence is ANVGIVGFPN…LVAQVFALHQ (170 aa). Residues 166-173, 191-195, 212-215, 282-285, and 310-312 contribute to the GTP site; these read GFPNTGKS, FTTLV, DIPG, NKTD, and ISA. The Mg(2+) site is built by Ser173 and Thr193. The region spanning 355–433 is the OCT domain; the sequence is ASETDHDPLN…FAGQEFVIND (79 aa).

The protein belongs to the TRAFAC class OBG-HflX-like GTPase superfamily. OBG GTPase family. In terms of assembly, monomer. It depends on Mg(2+) as a cofactor.

It localises to the cytoplasm. In terms of biological role, an essential GTPase which binds GTP, GDP and possibly (p)ppGpp with moderate affinity, with high nucleotide exchange rates and a fairly low GTP hydrolysis rate. Plays a role in control of the cell cycle, stress response, ribosome biogenesis and in those bacteria that undergo differentiation, in morphogenesis control. The chain is GTPase Obg from Mycoplasma pneumoniae (strain ATCC 29342 / M129 / Subtype 1) (Mycoplasmoides pneumoniae).